Here is a 404-residue protein sequence, read N- to C-terminus: MQQVKKVVLAYSGGVDTSVCIPYLKNEYGISEVVTFVADLGQGDDLEIVRQKALNSGATKSVIGNLVDNFVEKYAFPAIRANALYGEKYPLSTALARPLIAENLVNLARELNADAVAHGCTGKGNDQVRFDLAIHALGPDLQIITPAREWKMSREEAILYGEKFGIPAPVSKKSPYSIDVNLLGRSIEAGLLEDPMQEPDEDVFDMTSSINNAPNAPKDVEIIFQNGFPIAIGNEFLSPVEIIQKANSLAGEHGFGRIDMIEDRVVGIKSREIYEAPGLLLLIKAHKELESITLNPDVLDFKNIVEKKWGQLVYQGFWFGPLKQALDGFIDSTQSSVNGKVKIRLHKGNAIVIGRSSQNNSLYREDLATYSKDDIFNHKQAEGFIYMWGMSNKIWAELNSKKNK.

ATP-binding positions include Ala10–Ser18 and Ala38. Residue Tyr89 participates in L-citrulline binding. Gly119 contributes to the ATP binding site. Residues Thr121, Asn125, and Asp126 each contribute to the L-aspartate site. Asn125 lines the L-citrulline pocket. Arg129, Ser177, Ser186, Glu262, and Tyr274 together coordinate L-citrulline.

Belongs to the argininosuccinate synthase family. Type 1 subfamily. As to quaternary structure, homotetramer.

It is found in the cytoplasm. It carries out the reaction L-citrulline + L-aspartate + ATP = 2-(N(omega)-L-arginino)succinate + AMP + diphosphate + H(+). It participates in amino-acid biosynthesis; L-arginine biosynthesis; L-arginine from L-ornithine and carbamoyl phosphate: step 2/3. The protein is Argininosuccinate synthase of Prochlorococcus marinus subsp. pastoris (strain CCMP1986 / NIES-2087 / MED4).